A 559-amino-acid polypeptide reads, in one-letter code: Malate synthase, glyoxysomal (559 aa).

The active-site Proton acceptor is R173. The active-site Proton donor is D459. The Microbody targeting signal signature appears at 557–559 (CKL).

Belongs to the malate synthase family.

The protein resides in the glyoxysome. It carries out the reaction glyoxylate + acetyl-CoA + H2O = (S)-malate + CoA + H(+). The protein operates within carbohydrate metabolism; glyoxylate cycle; (S)-malate from isocitrate: step 2/2. This chain is Malate synthase, glyoxysomal (LIP), found in Zea mays (Maize).